The following is a 304-amino-acid chain: UDP-N-acetylenolpyruvoylglucosamine reductase (304 aa).

The FAD-binding PCMH-type domain maps to 33–198; it reads RVGGPADILV…IEATIELESG (166 aa). Residue R177 is part of the active site. Catalysis depends on S227, which acts as the Proton donor. The active site involves E297.

This sequence belongs to the MurB family. The cofactor is FAD.

It localises to the cytoplasm. It catalyses the reaction UDP-N-acetyl-alpha-D-muramate + NADP(+) = UDP-N-acetyl-3-O-(1-carboxyvinyl)-alpha-D-glucosamine + NADPH + H(+). The protein operates within cell wall biogenesis; peptidoglycan biosynthesis. Its function is as follows. Cell wall formation. The chain is UDP-N-acetylenolpyruvoylglucosamine reductase from Clostridium perfringens (strain SM101 / Type A).